Here is a 90-residue protein sequence, read N- to C-terminus: HssA/B-like protein 4 (90 aa).

It belongs to the hssA/B family.

The sequence is that of HssA/B-like protein 4 (hssl4) from Dictyostelium discoideum (Social amoeba).